Consider the following 380-residue polypeptide: Crotonobetainyl-CoA reductase (380 aa).

It belongs to the acyl-CoA dehydrogenase family. In terms of assembly, homotetramer. FAD serves as cofactor.

Its subcellular location is the cytoplasm. It catalyses the reaction 4-(trimethylamino)butanoyl-CoA + oxidized [electron-transfer flavoprotein] + H(+) = crotonobetainyl-CoA + reduced [electron-transfer flavoprotein]. It participates in amine and polyamine metabolism; carnitine metabolism. Catalyzes the reduction of crotonobetainyl-CoA to gamma-butyrobetainyl-CoA. The chain is Crotonobetainyl-CoA reductase from Escherichia coli (strain UTI89 / UPEC).